Reading from the N-terminus, the 506-residue chain is MHIKADEISTIIKEQIQNYSQRIETTEVGTVLSVGDGIARVYGVQDVMSMELLEFPGNLLGMVLNLEQDNVGVALLGDDTGVEEGSTVKRTGRIFSVPVGDAVTGRVLNPLGQPLDGLGPLNATEKKPVEVKAPSIIDRKSIYEPLVTGIKAIDAMTPIGRGQRELIIGDRQTGKTSICIDAILAQKESGVHCFYVAIGQKASTVALVADTLRKHGAMEYTTIIAATASDPAPLQYISPYSGCTMAEYYRDHGQHALIVYDDLSKQAVAYRQMSLLLRRPPGREAFPGDVFYLHSRLLERAAKLSDELGGGSLTALPIIETQAGDVSAYIPTNVISITDGQVYLEPNLFNAGVRPAINVGLSVSRVGGAAQTKAMKQVSGTMRLDLAQYRELAAFAQFSSDLDKETQTKLERGARLVELLKQPQYQPMQLPEQVIVMFAATKGFMDDIPIDHIQNFSKTLIEYIQTMNPKILENISTQQALNEELDQQLTTAITECKKTFLPMNKR.

169–176 (GDRQTGKT) provides a ligand contact to ATP.

The protein belongs to the ATPase alpha/beta chains family. F-type ATPases have 2 components, CF(1) - the catalytic core - and CF(0) - the membrane proton channel. CF(1) has five subunits: alpha(3), beta(3), gamma(1), delta(1), epsilon(1). CF(0) has three main subunits: a(1), b(2) and c(9-12). The alpha and beta chains form an alternating ring which encloses part of the gamma chain. CF(1) is attached to CF(0) by a central stalk formed by the gamma and epsilon chains, while a peripheral stalk is formed by the delta and b chains.

Its subcellular location is the cell membrane. It catalyses the reaction ATP + H2O + 4 H(+)(in) = ADP + phosphate + 5 H(+)(out). In terms of biological role, produces ATP from ADP in the presence of a proton gradient across the membrane. The alpha chain is a regulatory subunit. This is ATP synthase subunit alpha from Lawsonia intracellularis (strain PHE/MN1-00).